The following is a 141-amino-acid chain: Hemoglobin subunit alpha-D (141 aa).

Residues 1-141 (VLTAEDRRLL…VADVLCEKYR (141 aa)) form the Globin domain. Gln58 and His87 together coordinate heme b.

It belongs to the globin family. Heterotetramer of two alpha chains and two beta chains. Red blood cells.

Involved in oxygen transport from the lung to the various peripheral tissues. This is Hemoglobin subunit alpha-D from Drymarchon melanurus erebennus (Texas indigo snake).